The sequence spans 194 residues: Molybdenum cofactor guanylyltransferase (194 aa).

GTP contacts are provided by residues 12–14, Lys-25, Asn-53, Asp-70, and Asp-100; that span reads LAG. Asp-100 is a binding site for Mg(2+).

Belongs to the MobA family. As to quaternary structure, monomer. Mg(2+) is required as a cofactor.

It localises to the cytoplasm. It catalyses the reaction Mo-molybdopterin + GTP + H(+) = Mo-molybdopterin guanine dinucleotide + diphosphate. Its function is as follows. Transfers a GMP moiety from GTP to Mo-molybdopterin (Mo-MPT) cofactor (Moco or molybdenum cofactor) to form Mo-molybdopterin guanine dinucleotide (Mo-MGD) cofactor. The chain is Molybdenum cofactor guanylyltransferase from Vibrio atlanticus (strain LGP32) (Vibrio splendidus (strain Mel32)).